The sequence spans 437 residues: Putative ABC transporter ATP-binding protein CTC_00753 (437 aa).

ABC transporter domains follow at residues methionine 1–isoleucine 143 and leucine 179–lysine 416. Residue glycine 219–serine 226 participates in ATP binding.

Belongs to the ABC transporter superfamily.

The protein resides in the cell membrane. Probably part of an ABC transporter complex. Responsible for energy coupling to the transport system. The polypeptide is Putative ABC transporter ATP-binding protein CTC_00753 (Clostridium tetani (strain Massachusetts / E88)).